We begin with the raw amino-acid sequence, 915 residues long: Protein translocase subunit SecA (915 aa).

Residues glutamine 87, 105–109 (GEGKT), and aspartate 512 each bind ATP. A disordered region spans residues 881–915 (LPGTAPVRPEPKIGRNEPCPCGSGKKYKHCHGQLN). Cysteine 899, cysteine 901, cysteine 910, and histidine 911 together coordinate Zn(2+). Positions 905 to 915 (KKYKHCHGQLN) are enriched in basic residues.

Belongs to the SecA family. As to quaternary structure, monomer and homodimer. Part of the essential Sec protein translocation apparatus which comprises SecA, SecYEG and auxiliary proteins SecDF-YajC and YidC. The cofactor is Zn(2+).

The protein localises to the cell inner membrane. The protein resides in the cytoplasm. The enzyme catalyses ATP + H2O + cellular proteinSide 1 = ADP + phosphate + cellular proteinSide 2.. Its function is as follows. Part of the Sec protein translocase complex. Interacts with the SecYEG preprotein conducting channel. Has a central role in coupling the hydrolysis of ATP to the transfer of proteins into and across the cell membrane, serving both as a receptor for the preprotein-SecB complex and as an ATP-driven molecular motor driving the stepwise translocation of polypeptide chains across the membrane. This is Protein translocase subunit SecA from Azotobacter vinelandii (strain DJ / ATCC BAA-1303).